The sequence spans 216 residues: Ribonuclease HII (216 aa).

The 189-residue stretch at Ala-28–Glu-216 folds into the RNase H type-2 domain. The a divalent metal cation site is built by Asp-34, Glu-35, and Asp-126.

It belongs to the RNase HII family. Mn(2+) is required as a cofactor. The cofactor is Mg(2+).

The protein localises to the cytoplasm. The catalysed reaction is Endonucleolytic cleavage to 5'-phosphomonoester.. Endonuclease that specifically degrades the RNA of RNA-DNA hybrids. The sequence is that of Ribonuclease HII from Geotalea uraniireducens (strain Rf4) (Geobacter uraniireducens).